The following is a 434-amino-acid chain: Ribosomal protein uS12 methylthiotransferase RimO (434 aa).

Residues 6–122 (SKLYLLTLGC…IIAELGGHYK (117 aa)) form the MTTase N-terminal domain. The [4Fe-4S] cluster site is built by C15, C51, C85, C146, C150, and C153. The region spanning 132-361 (LTPPYFSYLK…MAAQEEIAYA (230 aa)) is the Radical SAM core domain. One can recognise a TRAM domain in the interval 364 to 434 (QALVGSFMPV…AFDLFGSLVL (71 aa)).

This sequence belongs to the methylthiotransferase family. RimO subfamily. [4Fe-4S] cluster is required as a cofactor.

It is found in the cytoplasm. The catalysed reaction is L-aspartate(89)-[ribosomal protein uS12]-hydrogen + (sulfur carrier)-SH + AH2 + 2 S-adenosyl-L-methionine = 3-methylsulfanyl-L-aspartate(89)-[ribosomal protein uS12]-hydrogen + (sulfur carrier)-H + 5'-deoxyadenosine + L-methionine + A + S-adenosyl-L-homocysteine + 2 H(+). In terms of biological role, catalyzes the methylthiolation of an aspartic acid residue of ribosomal protein uS12. The chain is Ribosomal protein uS12 methylthiotransferase RimO from Chloroherpeton thalassium (strain ATCC 35110 / GB-78).